Reading from the N-terminus, the 63-residue chain is Small ribosomal subunit protein bS21 (63 aa).

Belongs to the bacterial ribosomal protein bS21 family.

This is Small ribosomal subunit protein bS21 from Syntrophus aciditrophicus (strain SB).